We begin with the raw amino-acid sequence, 177 residues long: Dihydrofolate reductase (177 aa).

The enzyme catalyses (6S)-5,6,7,8-tetrahydrofolate + NADP(+) = 7,8-dihydrofolate + NADPH + H(+). In terms of biological role, provides the tetrahydrofolates necessary for the synthesis of nucleotides and amino acids. Bacteriophage T5 induces high levels of dihydrofolate reductase in the host cell, probably for the viral replication. The chain is Dihydrofolate reductase from Escherichia phage T5 (Enterobacteria phage T5).